A 94-amino-acid polypeptide reads, in one-letter code: Small ribosomal subunit protein bS20 (94 aa).

Basic and acidic residues predominate over residues 1 to 10 (MANHASADKR). The interval 1-20 (MANHASADKRNRQRITRTAR) is disordered. Over residues 11-20 (NRQRITRTAR) the composition is skewed to basic residues.

The protein belongs to the bacterial ribosomal protein bS20 family.

Its function is as follows. Binds directly to 16S ribosomal RNA. This chain is Small ribosomal subunit protein bS20, found in Sorangium cellulosum (strain So ce56) (Polyangium cellulosum (strain So ce56)).